A 918-amino-acid polypeptide reads, in one-letter code: Serine/threonine-protein kinase D1 (918 aa).

Position 93 is a phosphotyrosine (Tyr93). Residues 144 to 194 (PHALFVHSYRAPAFCDHCGEMLWGLVRQGLKCEGCGLNYHKRCAFKIPNNC) form a Phorbol-ester/DAG-type 1 zinc finger. A phosphoserine mark is found at Ser203, Ser206, Ser217, and Ser221. A Phorbol-ester/DAG-type 2 zinc finger spans residues 276-326 (PHTFVIHSYTRPTVCQFCKKLLKGLFRQGLQCKDCRFNCHKRCAPKVPNNC). 2 disordered regions span residues 338 to 362 (SPGA…NSGL) and 380 to 408 (EGQS…STSN). Composition is skewed to acidic residues over residues 345–355 (VVMEEGSDDND) and 387–396 (EMQDPDADQE). Position 351 is a phosphoserine (Ser351). Phosphoserine; by MAPK13 occurs at positions 403 and 407. The 120-residue stretch at 428–547 (TVMKEGWMVH…WEVAIQHALM (120 aa)) folds into the PH domain. Tyr438 carries the phosphotyrosine modification. Position 454 is a phosphoserine (Ser454). Position 469 is a phosphotyrosine; by ABL (Tyr469). Tyr508 is modified (phosphotyrosine). Ser554 is subject to Phosphoserine. Positions 589–845 (IFPDEVLGSG…VDKTLSHPWL (257 aa)) constitute a Protein kinase domain. Residues 595–603 (LGSGQFGIV) and Lys618 each bind ATP. The Proton acceptor role is filled by Asp712. The residue at position 744 (Ser744) is a Phosphoserine; by PKC/PRKCD. Position 748 is a phosphoserine; by autocatalysis and PKC/PRKCD (Ser748). The residue at position 755 (Tyr755) is a Phosphotyrosine. Position 916 is a phosphoserine; by autocatalysis (Ser916).

This sequence belongs to the protein kinase superfamily. CAMK Ser/Thr protein kinase family. PKD subfamily. In terms of assembly, interacts (via N-terminus) with ADAP1/CENTA1. Interacts with MAPK13. Interacts with DAPK1 in an oxidative stress-regulated manner. Interacts with USP28; the interaction induces phosphorylation of USP28 and activated KRAS-mediated stabilization of ZNF304. Interacts with AKAP13 (via C-terminal domain). Requires Mg(2+) as cofactor. Phosphorylated at Ser-403 and Ser-407 by MAPK13 during regulation of insulin secretion in pancreatic beta cells. Phosphorylated by DAPK1. Phosphorylated at Tyr-93 and by ABL at Tyr-469, which primes the kinase in response to oxidative stress, and promotes a second step activating phosphorylation at Ser-744/Ser-748 by PKRD. Phosphorylated on Ser-916 upon S.enterica infection in macrophages.

Its subcellular location is the cytoplasm. The protein resides in the cell membrane. It localises to the golgi apparatus. It is found in the trans-Golgi network. The catalysed reaction is L-seryl-[protein] + ATP = O-phospho-L-seryl-[protein] + ADP + H(+). The enzyme catalyses L-threonyl-[protein] + ATP = O-phospho-L-threonyl-[protein] + ADP + H(+). Activated by DAG and phorbol esters. Phorbol-ester/DAG-type domain 1 binds DAG with high affinity and appears to play the dominant role in mediating translocation to the cell membrane and trans-Golgi network. Phorbol-ester/DAG-type domain 2 binds phorbol ester with higher affinity. Autophosphorylation of Ser-748 and phosphorylation of Ser-744 by PKC relieves auto-inhibition by the PH domain. Phosphorylation on Tyr-469 by the SRC-ABL1 pathway in response to oxidative stress, is also required for activation. Activated by DAPK1 under oxidative stress. In terms of biological role, serine/threonine-protein kinase that converts transient diacylglycerol (DAG) signals into prolonged physiological effects downstream of PKC, and is involved in the regulation of MAPK8/JNK1 and Ras signaling, Golgi membrane integrity and trafficking, cell survival through NF-kappa-B activation, cell migration, cell differentiation by mediating HDAC7 nuclear export, cell proliferation via MAPK1/3 (ERK1/2) signaling, and plays a role in cardiac hypertrophy, VEGFA-induced angiogenesis, genotoxic-induced apoptosis and flagellin-stimulated inflammatory response. Phosphorylates the epidermal growth factor receptor (EGFR) on dual threonine residues, which leads to the suppression of epidermal growth factor (EGF)-induced MAPK8/JNK1 activation and subsequent JUN phosphorylation. Phosphorylates RIN1, inducing RIN1 binding to 14-3-3 proteins YWHAB, YWHAE and YWHAZ and increased competition with RAF1 for binding to GTP-bound form of Ras proteins (NRAS, HRAS and KRAS). Acts downstream of the heterotrimeric G-protein beta/gamma-subunit complex to maintain the structural integrity of the Golgi membranes, and is required for protein transport along the secretory pathway. In the trans-Golgi network (TGN), regulates the fission of transport vesicles that are on their way to the plasma membrane. May act by activating the lipid kinase phosphatidylinositol 4-kinase beta (PI4KB) at the TGN for the local synthesis of phosphorylated inositol lipids, which induces a sequential production of DAG, phosphatidic acid (PA) and lyso-PA (LPA) that are necessary for membrane fission and generation of specific transport carriers to the cell surface. Under oxidative stress, is phosphorylated at Tyr-469 via SRC-ABL1 and contributes to cell survival by activating IKK complex and subsequent nuclear translocation and activation of NFKB1. Involved in cell migration by regulating integrin alpha-5/beta-3 recycling and promoting its recruitment in newly forming focal adhesion. In osteoblast differentiation, mediates the bone morphogenetic protein 2 (BMP2)-induced nuclear export of HDAC7, which results in the inhibition of HDAC7 transcriptional repression of RUNX2. In neurons, plays an important role in neuronal polarity by regulating the biogenesis of TGN-derived dendritic vesicles, and is involved in the maintenance of dendritic arborization and Golgi structure in hippocampal cells. May potentiate mitogenesis induced by the neuropeptide bombesin or vasopressin by mediating an increase in the duration of MAPK1/3 (ERK1/2) signaling, which leads to accumulation of immediate-early gene products including FOS that stimulate cell cycle progression. Plays an important role in the proliferative response induced by low calcium in keratinocytes, through sustained activation of MAPK1/3 (ERK1/2) pathway. Downstream of novel PKC signaling, plays a role in cardiac hypertrophy by phosphorylating HDAC5, which in turn triggers XPO1/CRM1-dependent nuclear export of HDAC5, MEF2A transcriptional activation and induction of downstream target genes that promote myocyte hypertrophy and pathological cardiac remodeling. Mediates cardiac troponin I (TNNI3) phosphorylation at the PKA sites, which results in reduced myofilament calcium sensitivity, and accelerated crossbridge cycling kinetics. The PRKD1-HDAC5 pathway is also involved in angiogenesis by mediating VEGFA-induced specific subset of gene expression, cell migration, and tube formation. In response to VEGFA, is necessary and required for HDAC7 phosphorylation which induces HDAC7 nuclear export and endothelial cell proliferation and migration. During apoptosis induced by cytarabine and other genotoxic agents, PRKD1 is cleaved by caspase-3 at Asp-378, resulting in activation of its kinase function and increased sensitivity of cells to the cytotoxic effects of genotoxic agents. In epithelial cells, is required for transducing flagellin-stimulated inflammatory responses by binding and phosphorylating TLR5, which contributes to MAPK14/p38 activation and production of inflammatory cytokines. Acts as an activator of NLRP3 inflammasome assembly by mediating phosphorylation of NLRP3. May play a role in inflammatory response by mediating activation of NF-kappa-B. May be involved in pain transmission by directly modulating TRPV1 receptor. Plays a role in activated KRAS-mediated stabilization of ZNF304 in colorectal cancer (CRC) cells. Regulates nuclear translocation of transcription factor TFEB in macrophages upon live S.enterica infection. The sequence is that of Serine/threonine-protein kinase D1 (Prkd1) from Rattus norvegicus (Rat).